The primary structure comprises 131 residues: Profilin (131 aa).

The protein belongs to the profilin family. Occurs in many kinds of cells as a complex with monomeric actin in a 1:1 ratio.

Its subcellular location is the cytoplasm. The protein resides in the cytoskeleton. Its function is as follows. Binds to actin and affects the structure of the cytoskeleton. At high concentrations, profilin prevents the polymerization of actin, whereas it enhances it at low concentrations. By binding to PIP2, it inhibits the formation of IP3 and DG. This is Profilin from Litchi chinensis (Lychee).